A 525-amino-acid chain; its full sequence is Neuropilin and tolloid-like protein 2 (525 aa).

Residues 1-22 (MALERLCSVLKVLLITVLVVEG) form the signal peptide. At 23–347 (IAVAQKTQDG…GVFEQITKTH (325 aa)) the chain is on the extracellular side. 7 cysteine pairs are disulfide-bonded: cysteine 45–cysteine 72, cysteine 100–cysteine 122, cysteine 177–cysteine 207, cysteine 234–cysteine 256, cysteine 297–cysteine 309, cysteine 304–cysteine 322, and cysteine 316–cysteine 331. 2 CUB domains span residues 45-159 (CGIW…YSFI) and 177-292 (CQFE…FTSF). The LDL-receptor class A domain occupies 296-332 (PCTSSTFFCHSNMCINNSLVCNGVQNCAYPWDENHCK). Asparagine 311 is a glycosylation site (N-linked (GlcNAc...) asparagine). A helical transmembrane segment spans residues 348-368 (GTIIGITSGIVLVLLIISILV). Residues 369–525 (QVKQPRKKVM…SAQASISIDF (157 aa)) lie on the Cytoplasmic side of the membrane. Phosphoserine is present on serine 409.

As to quaternary structure, interacts with GRIK2 and GRIK3, but neither with AMPA-nor with NMDA-sensitive glutamate receptors. N-glycosylated.

It localises to the membrane. Functionally, accessory subunit of neuronal kainate-sensitive glutamate receptors, GRIK2 and GRIK3. Increases kainate-receptor channel activity, slowing the decay kinetics of the receptors, without affecting their expression at the cell surface, and increasing the open probability of the receptor channels. Modulates the agonist sensitivity of kainate receptors. Slows the decay of kainate receptor-mediated excitatory postsynaptic currents (EPSCs), thus directly influencing synaptic transmission. The protein is Neuropilin and tolloid-like protein 2 (NETO2) of Homo sapiens (Human).